Consider the following 361-residue polypeptide: 1D-myo-inositol 2-acetamido-2-deoxy-alpha-D-glucopyranoside deacetylase (361 aa).

Residues 1–12 show a composition bias toward pro residues; that stretch reads MTTTPQPPPQPD. Residues 1 to 27 are disordered; the sequence is MTTTPQPPPQPDETPEGAAGAATAGRD. The span at 16-25 shows a compositional bias: low complexity; it reads EGAAGAATAG. Histidine 66, aspartate 69, and histidine 207 together coordinate Zn(2+).

It belongs to the MshB deacetylase family. It depends on Zn(2+) as a cofactor.

It carries out the reaction 1D-myo-inositol 2-acetamido-2-deoxy-alpha-D-glucopyranoside + H2O = 1D-myo-inositol 2-amino-2-deoxy-alpha-D-glucopyranoside + acetate. Its function is as follows. Catalyzes the deacetylation of 1D-myo-inositol 2-acetamido-2-deoxy-alpha-D-glucopyranoside (GlcNAc-Ins) in the mycothiol biosynthesis pathway. This chain is 1D-myo-inositol 2-acetamido-2-deoxy-alpha-D-glucopyranoside deacetylase, found in Kineococcus radiotolerans (strain ATCC BAA-149 / DSM 14245 / SRS30216).